A 630-amino-acid polypeptide reads, in one-letter code: tRNA uridine 5-carboxymethylaminomethyl modification enzyme MnmG (630 aa).

An FAD-binding site is contributed by 13 to 18 (GGGHAG). Residue 273 to 287 (GPRYCPSIEDKIHRF) participates in NAD(+) binding.

It belongs to the MnmG family. In terms of assembly, homodimer. Heterotetramer of two MnmE and two MnmG subunits. FAD serves as cofactor.

Its subcellular location is the cytoplasm. Functionally, NAD-binding protein involved in the addition of a carboxymethylaminomethyl (cmnm) group at the wobble position (U34) of certain tRNAs, forming tRNA-cmnm(5)s(2)U34. In Pseudomonas aeruginosa (strain ATCC 15692 / DSM 22644 / CIP 104116 / JCM 14847 / LMG 12228 / 1C / PRS 101 / PAO1), this protein is tRNA uridine 5-carboxymethylaminomethyl modification enzyme MnmG.